We begin with the raw amino-acid sequence, 129 residues long: Flagellar assembly factor FliW (129 aa).

It belongs to the FliW family. Interacts with flagellins FlaA and FlaB but not with FlaC; recognizes glycosylated and non-glycosylated FlaA equally. Interacts with CsrA. May form a 3-way complex of flagellin, FliS and FliW simultaneously in which FliS and FliW do not directly interact.

The protein localises to the cytoplasm. Functionally, acts as an anti-CsrA protein, binds CsrA and prevents it from repressing translation of its target genes, one of which is flagellin. Binds to flagellin and participates in the assembly of the flagellum. In terms of biological role, overexpression leads to increased levels of FlaA and FlaB, but levels of FlaC remain stable. Involved in post-transcriptional regulation of flagellin biosynthesis. The polypeptide is Flagellar assembly factor FliW (Campylobacter jejuni subsp. jejuni serotype O:6 (strain 81116 / NCTC 11828)).